The sequence spans 102 residues: A-type ATP synthase subunit F (102 aa).

This sequence belongs to the V-ATPase F subunit family. As to quaternary structure, has multiple subunits with at least A(3), B(3), C, D, E, F, H, I and proteolipid K(x).

The protein resides in the cell membrane. Component of the A-type ATP synthase that produces ATP from ADP in the presence of a proton gradient across the membrane. This is A-type ATP synthase subunit F from Thermococcus gammatolerans (strain DSM 15229 / JCM 11827 / EJ3).